A 480-amino-acid polypeptide reads, in one-letter code: Ribulose bisphosphate carboxylase large chain (480 aa).

A propeptide spanning residues 1–2 (MS) is cleaved from the precursor. An N-acetylproline modification is found at proline 3. An N6,N6,N6-trimethyllysine modification is found at lysine 14. Substrate is bound by residues asparagine 123 and threonine 173. Lysine 175 functions as the Proton acceptor in the catalytic mechanism. Residue lysine 177 coordinates substrate. Mg(2+) is bound by residues lysine 201, aspartate 203, and glutamate 204. Lysine 201 bears the N6-carboxylysine mark. Histidine 294 (proton acceptor) is an active-site residue. Substrate-binding residues include arginine 295, histidine 327, and serine 379.

It belongs to the RuBisCO large chain family. Type I subfamily. In terms of assembly, heterohexadecamer of 8 large chains and 8 small chains; disulfide-linked. The disulfide link is formed within the large subunit homodimers. Requires Mg(2+) as cofactor. Post-translationally, the disulfide bond which can form in the large chain dimeric partners within the hexadecamer appears to be associated with oxidative stress and protein turnover.

It localises to the plastid. It is found in the chloroplast. It catalyses the reaction 2 (2R)-3-phosphoglycerate + 2 H(+) = D-ribulose 1,5-bisphosphate + CO2 + H2O. It carries out the reaction D-ribulose 1,5-bisphosphate + O2 = 2-phosphoglycolate + (2R)-3-phosphoglycerate + 2 H(+). In terms of biological role, ruBisCO catalyzes two reactions: the carboxylation of D-ribulose 1,5-bisphosphate, the primary event in carbon dioxide fixation, as well as the oxidative fragmentation of the pentose substrate in the photorespiration process. Both reactions occur simultaneously and in competition at the same active site. This Rivina humilis (Rougeplant) protein is Ribulose bisphosphate carboxylase large chain.